The chain runs to 249 residues: Methyl-coenzyme M reductase I subunit gamma (249 aa).

Position 120 (arginine 120) interacts with coenzyme M.

Belongs to the methyl-coenzyme M reductase gamma subunit family. In terms of assembly, MCR is a hexamer of two alpha, two beta, and two gamma chains, forming a dimer of heterotrimers. It depends on coenzyme F430 as a cofactor.

The protein resides in the cytoplasm. It catalyses the reaction coenzyme B + methyl-coenzyme M = methane + coenzyme M-coenzyme B heterodisulfide. It functions in the pathway one-carbon metabolism; methyl-coenzyme M reduction; methane from methyl-coenzyme M: step 1/1. Functionally, component of the methyl-coenzyme M reductase (MCR) I that catalyzes the reductive cleavage of methyl-coenzyme M (CoM-S-CH3 or 2-(methylthio)ethanesulfonate) using coenzyme B (CoB or 7-mercaptoheptanoylthreonine phosphate) as reductant which results in the production of methane and the mixed heterodisulfide of CoB and CoM (CoM-S-S-CoB). This is the final step in methanogenesis. The polypeptide is Methyl-coenzyme M reductase I subunit gamma (mcrG) (Methanothermobacter thermautotrophicus (strain ATCC 29096 / DSM 1053 / JCM 10044 / NBRC 100330 / Delta H) (Methanobacterium thermoautotrophicum)).